A 429-amino-acid chain; its full sequence is Protein AST1 (429 aa).

Interacts with PMA1.

The protein resides in the cell membrane. The protein localises to the membrane raft. It is found in the golgi apparatus membrane. Its subcellular location is the late endosome membrane. Its function is as follows. Lipid raft-associated protein involved in the targeting of PMA1 from Golgi to the plasma membrane. May induce clustering of PMA1, which facilitates partition of PMA1 into lipid rafts after leaving the ER and its transport to the cell surface. The polypeptide is Protein AST1 (Saccharomyces cerevisiae (strain ATCC 204508 / S288c) (Baker's yeast)).